Consider the following 364-residue polypeptide: Probable dual-specificity RNA methyltransferase RlmN (364 aa).

The active-site Proton acceptor is glutamate 107. Positions 113-346 constitute a Radical SAM core domain; the sequence is HNYGNSVCVT…VTIRREHGHD (234 aa). Cysteines 120 and 351 form a disulfide. The [4Fe-4S] cluster site is built by cysteine 127, cysteine 131, and cysteine 134. S-adenosyl-L-methionine is bound by residues 177 to 178, serine 209, 232 to 234, and asparagine 308; these read GE and SLH. Cysteine 351 functions as the S-methylcysteine intermediate in the catalytic mechanism.

Belongs to the radical SAM superfamily. RlmN family. [4Fe-4S] cluster is required as a cofactor.

It localises to the cytoplasm. It carries out the reaction adenosine(2503) in 23S rRNA + 2 reduced [2Fe-2S]-[ferredoxin] + 2 S-adenosyl-L-methionine = 2-methyladenosine(2503) in 23S rRNA + 5'-deoxyadenosine + L-methionine + 2 oxidized [2Fe-2S]-[ferredoxin] + S-adenosyl-L-homocysteine. It catalyses the reaction adenosine(37) in tRNA + 2 reduced [2Fe-2S]-[ferredoxin] + 2 S-adenosyl-L-methionine = 2-methyladenosine(37) in tRNA + 5'-deoxyadenosine + L-methionine + 2 oxidized [2Fe-2S]-[ferredoxin] + S-adenosyl-L-homocysteine. Specifically methylates position 2 of adenine 2503 in 23S rRNA and position 2 of adenine 37 in tRNAs. The polypeptide is Probable dual-specificity RNA methyltransferase RlmN (Geobacillus thermodenitrificans (strain NG80-2)).